The chain runs to 782 residues: Homeotic protein proboscipedia (782 aa).

Disordered stretches follow at residues 1–23, 153–195, 251–336, 358–380, 439–493, and 547–586; these read MQEV…ESPL, PQTP…VPEN, MKHK…GISS, SSVS…KDDG, IATP…QQQP, and YYNY…ADFE. The short motif at 164–169 is the Antp-type hexapeptide element; sequence EYPWMK. A DNA-binding region (homeobox) is located at residues 198–257; the sequence is PRRLRTAYTNTQLLELEKEFHFNKYLCRPRRIEIAASLDLTERQVKVWFQNRRMKHKRQT. Over residues 308 to 321 the composition is skewed to low complexity; sequence NNNTPSATNNNPSA. The span at 322–336 shows a compositional bias: polar residues; sequence GNLTPNSSLETGISS. The span at 452 to 463 shows a compositional bias: gly residues; the sequence is NGSGGGPAGGYF. Residues 464 to 493 show a composition bias toward low complexity; the sequence is PGYYPSPKQQQQVQQQQLHPQQQQLPQQQP. Residues 563 to 580 show a composition bias toward basic residues; that stretch reads QQHHHHAQHHQQQQHHQN.

Belongs to the Antp homeobox family. Proboscipedia subfamily.

It is found in the nucleus. Its function is as follows. Sequence-specific transcription factor which is part of a developmental regulatory system that provides cells with specific positional identities on the anterior-posterior axis. Controls development of mouthparts, and labial and maxillary palps. This is Homeotic protein proboscipedia (pb) from Drosophila melanogaster (Fruit fly).